A 445-amino-acid chain; its full sequence is MGESIPLAAPVPVEQAVLETFFSHLGIFSYDKAKDNVEKEREANKSAGGSWLSLLAALAHLAAAEKVYHSLTYLGQKLGGQSFFSRKDSIRTIYTSLHNELKKVVTGRGALGGTAPHVEELLSHLSEQLCFFVQARMEIADFYEKMYTLSTQKFINAEELVGLLDAIMKKYSSRFHHPILSPLESSFQLEVDVLCHLLKAQAQVSEWKFLPSLVNLHSAHTKLQTWGQIFEKQRETKKHLFGGQSQKAVQPPHLFLWLMKLKNMLLAKFSFYFHEALSRQTTASEMKTLTAKANPDFFGKISSFIRKYDAANVSLIFDNRGSESFQGHGYHHPHSYREAPKGVDQYPAVVSLPSDRPVMHWPNVIMIMTDRTSDLNSLEKVVHFYDDKVQSTYFLTRPEPHFTIVIIFESKKSERDSHFISFLNEVSLALKNPKVFASLKPGAKG.

It belongs to the KICS2 family. Part of the KICSTOR complex composed of KPTN, ITFG2, KICS2 and SZT2. SZT2 probably serves as a link between the other three proteins in the KICSTOR complex and may mediate the direct interaction with the GATOR complex via GATOR1. The KICSTOR complex interacts directly with the GATOR1 complex and most probably indirectly with the GATOR2 complex in an amino acid-independent manner.

It is found in the lysosome membrane. In terms of biological role, as part of the KICSTOR complex functions in the amino acid-sensing branch of the TORC1 signaling pathway. Recruits, in an amino acid-independent manner, the GATOR1 complex to the lysosomal membranes and allows its interaction with GATOR2 and the RAG GTPases. Functions upstream of the RAG GTPases and is required to negatively regulate mTORC1 signaling in absence of amino acids. In absence of the KICSTOR complex mTORC1 is constitutively localized to the lysosome and activated. The KICSTOR complex is also probably involved in the regulation of mTORC1 by glucose. This chain is KICSTOR subunit 2, found in Homo sapiens (Human).